We begin with the raw amino-acid sequence, 185 residues long: Ribosome-recycling factor (185 aa).

Belongs to the RRF family.

It localises to the cytoplasm. In terms of biological role, responsible for the release of ribosomes from messenger RNA at the termination of protein biosynthesis. May increase the efficiency of translation by recycling ribosomes from one round of translation to another. This is Ribosome-recycling factor from Streptococcus pyogenes serotype M1.